A 236-amino-acid polypeptide reads, in one-letter code: NEP1-interacting protein 1 (236 aa).

Residues 1–44 (MASSRFQSGFCPISSCPSLENFIERIKDACRFTLSAVLGTILSA) lie on the Lumenal, thylakoid side of the membrane. The helical transmembrane segment at 45-65 (VLTFFFALVGTLLGALTGALI) threads the bilayer. Topologically, residues 66-78 (GQETESGFIRGAA) are stromal. Residues 79-99 (VGAISGAVFSIEVFESSLVLW) form a helical membrane-spanning segment. Topologically, residues 100–104 (KSNES) are lumenal, thylakoid. The chain crosses the membrane as a helical span at residues 105–125 (RFGCLLYLIDVIVSLISGRLV). At 126–236 (RERIGPAMLS…GSCPMCRRDL (111 aa)) the chain is on the stromal side. An RING-type; atypical zinc finger spans residues 191 to 233 (CSVCLQDFQLGETVRSLPHCHHMFHLPCIDNWLFRHGSCPMCR).

This sequence belongs to the RING-type zinc finger family. NIP subfamily. As to quaternary structure, interacts with RPOT2.

The protein resides in the plastid. It localises to the chloroplast thylakoid membrane. Its function is as follows. Intrinsic thylakoid membrane protein that fixes RPOT2 on the stromal side of the thylakoid membrane. The chain is NEP1-interacting protein 1 (NIP1) from Arabidopsis thaliana (Mouse-ear cress).